Consider the following 308-residue polypeptide: Bifunctional protein FolD (308 aa).

Residues 175–177 (GRS), Ser200, and Ile241 each bind NADP(+).

It belongs to the tetrahydrofolate dehydrogenase/cyclohydrolase family. Homodimer.

It catalyses the reaction (6R)-5,10-methylene-5,6,7,8-tetrahydrofolate + NADP(+) = (6R)-5,10-methenyltetrahydrofolate + NADPH. It carries out the reaction (6R)-5,10-methenyltetrahydrofolate + H2O = (6R)-10-formyltetrahydrofolate + H(+). Its pathway is one-carbon metabolism; tetrahydrofolate interconversion. Functionally, catalyzes the oxidation of 5,10-methylenetetrahydrofolate to 5,10-methenyltetrahydrofolate and then the hydrolysis of 5,10-methenyltetrahydrofolate to 10-formyltetrahydrofolate. The protein is Bifunctional protein FolD of Jannaschia sp. (strain CCS1).